A 75-amino-acid polypeptide reads, in one-letter code: Small ribosomal subunit protein bS18 (75 aa).

It belongs to the bacterial ribosomal protein bS18 family. Part of the 30S ribosomal subunit. Forms a tight heterodimer with protein bS6.

Binds as a heterodimer with protein bS6 to the central domain of the 16S rRNA, where it helps stabilize the platform of the 30S subunit. This is Small ribosomal subunit protein bS18 from Cereibacter sphaeroides (strain KD131 / KCTC 12085) (Rhodobacter sphaeroides).